Reading from the N-terminus, the 59-residue chain is uncharacterized protein (59 aa).

The helical transmembrane segment at 7 to 24 (FLLVFIILAQLLSCTPSA) threads the bilayer.

Its subcellular location is the membrane. This is an uncharacterized protein from Rickettsia prowazekii (strain Madrid E).